A 640-amino-acid polypeptide reads, in one-letter code: 1-deoxy-D-xylulose-5-phosphate synthase (640 aa).

Thiamine diphosphate-binding positions include His-75 and 117–119 (GHA). Asp-146 is a binding site for Mg(2+). Thiamine diphosphate-binding positions include 147-148 (AA), Asn-175, and Glu-370. Asn-175 contacts Mg(2+).

It belongs to the transketolase family. DXPS subfamily. As to quaternary structure, homodimer. The cofactor is Mg(2+). Requires thiamine diphosphate as cofactor.

It catalyses the reaction D-glyceraldehyde 3-phosphate + pyruvate + H(+) = 1-deoxy-D-xylulose 5-phosphate + CO2. The protein operates within metabolic intermediate biosynthesis; 1-deoxy-D-xylulose 5-phosphate biosynthesis; 1-deoxy-D-xylulose 5-phosphate from D-glyceraldehyde 3-phosphate and pyruvate: step 1/1. Its function is as follows. Catalyzes the acyloin condensation reaction between C atoms 2 and 3 of pyruvate and glyceraldehyde 3-phosphate to yield 1-deoxy-D-xylulose-5-phosphate (DXP). This is 1-deoxy-D-xylulose-5-phosphate synthase from Chlamydia trachomatis serovar A (strain ATCC VR-571B / DSM 19440 / HAR-13).